We begin with the raw amino-acid sequence, 253 residues long: DnaJ homolog subfamily C member 8 (253 aa).

Position 2 is an N-acetylalanine (A2). Phosphoserine is present on S35. In terms of domain architecture, J spans 57–124 (NPFEVLQIDP…QKKRALDVIQ (68 aa)). K146 carries the post-translational modification N6-acetyllysine. Residues 181 to 222 (EAKEMHERKRQREEEIEAQEKAKREREWQKNFEESRDGRVDS) are compositionally biased toward basic and acidic residues. The segment at 181 to 253 (EAKEMHERKR…PPKVKMEQRE (73 aa)) is disordered. Short sequence motifs (nuclear localization signal) lie at residues 189-192 (KRQR) and 203-206 (KRER). The residue at position 222 (S222) is a Phosphoserine. Over residues 231–240 (KGKKEKKNRT) the composition is skewed to basic residues. Residues 232–253 (GKKEKKNRTFLRPPKVKMEQRE) form an essential for polyglutamine aggregation suppression region.

In terms of assembly, interacts with SRPK1. Interacts with HSP70 (HSPA1A or HSPA1B). In terms of tissue distribution, ubiquitous.

It localises to the nucleus. Functionally, suppresses polyglutamine (polyQ) aggregation of ATXN3 in neuronal cells. The chain is DnaJ homolog subfamily C member 8 (DNAJC8) from Homo sapiens (Human).